The primary structure comprises 78 residues: Acyl carrier protein (78 aa).

A Carrier domain is found at 4–78; that stretch reads AEIRDKVYDI…QQAIDYIVKK (75 aa). Position 39 is an O-(pantetheine 4'-phosphoryl)serine (Ser-39).

It belongs to the acyl carrier protein (ACP) family. Post-translationally, 4'-phosphopantetheine is transferred from CoA to a specific serine of apo-ACP by AcpS. This modification is essential for activity because fatty acids are bound in thioester linkage to the sulfhydryl of the prosthetic group.

It localises to the cytoplasm. Its pathway is lipid metabolism; fatty acid biosynthesis. Functionally, carrier of the growing fatty acid chain in fatty acid biosynthesis. In Chlorobium luteolum (strain DSM 273 / BCRC 81028 / 2530) (Pelodictyon luteolum), this protein is Acyl carrier protein.